Here is a 108-residue protein sequence, read N- to C-terminus: Phosphoribosyl-AMP cyclohydrolase (108 aa).

Aspartate 78 is a Mg(2+) binding site. Residue cysteine 79 coordinates Zn(2+). Mg(2+)-binding residues include aspartate 80 and aspartate 82. Positions 95 and 102 each coordinate Zn(2+).

Belongs to the PRA-CH family. Homodimer. Mg(2+) is required as a cofactor. It depends on Zn(2+) as a cofactor.

Its subcellular location is the cytoplasm. The enzyme catalyses 1-(5-phospho-beta-D-ribosyl)-5'-AMP + H2O = 1-(5-phospho-beta-D-ribosyl)-5-[(5-phospho-beta-D-ribosylamino)methylideneamino]imidazole-4-carboxamide. It functions in the pathway amino-acid biosynthesis; L-histidine biosynthesis; L-histidine from 5-phospho-alpha-D-ribose 1-diphosphate: step 3/9. Functionally, catalyzes the hydrolysis of the adenine ring of phosphoribosyl-AMP. The chain is Phosphoribosyl-AMP cyclohydrolase from Cenarchaeum symbiosum (strain A).